Reading from the N-terminus, the 246-residue chain is 3-deoxy-manno-octulosonate cytidylyltransferase (246 aa).

It belongs to the KdsB family.

Its subcellular location is the cytoplasm. The enzyme catalyses 3-deoxy-alpha-D-manno-oct-2-ulosonate + CTP = CMP-3-deoxy-beta-D-manno-octulosonate + diphosphate. The protein operates within nucleotide-sugar biosynthesis; CMP-3-deoxy-D-manno-octulosonate biosynthesis; CMP-3-deoxy-D-manno-octulosonate from 3-deoxy-D-manno-octulosonate and CTP: step 1/1. It participates in bacterial outer membrane biogenesis; lipopolysaccharide biosynthesis. Its function is as follows. Activates KDO (a required 8-carbon sugar) for incorporation into bacterial lipopolysaccharide in Gram-negative bacteria. This is 3-deoxy-manno-octulosonate cytidylyltransferase from Rickettsia akari (strain Hartford).